Here is a 968-residue protein sequence, read N- to C-terminus: RNA polymerase-associated protein RapA (968 aa).

The region spanning 164–334 (DVGRRHAPRV…FARLRLLDPS (171 aa)) is the Helicase ATP-binding domain. ATP is bound at residue 177–184 (DEVGLGKT). A DEAH box motif is present at residues 280-283 (DEAH). The 155-residue stretch at 490–644 (RVEWLMGHLT…TCPTGRAIYD (155 aa)) folds into the Helicase C-terminal domain.

It belongs to the SNF2/RAD54 helicase family. RapA subfamily. Interacts with the RNAP. Has a higher affinity for the core RNAP than for the holoenzyme. Its ATPase activity is stimulated by binding to RNAP.

Transcription regulator that activates transcription by stimulating RNA polymerase (RNAP) recycling in case of stress conditions such as supercoiled DNA or high salt concentrations. Probably acts by releasing the RNAP, when it is trapped or immobilized on tightly supercoiled DNA. Does not activate transcription on linear DNA. Probably not involved in DNA repair. The protein is RNA polymerase-associated protein RapA of Citrobacter koseri (strain ATCC BAA-895 / CDC 4225-83 / SGSC4696).